A 223-amino-acid polypeptide reads, in one-letter code: Dephospho-CoA kinase (223 aa).

In terms of domain architecture, DPCK spans 22 to 223; it reads LIGLSGPSCS…LLQEVKKRGF (202 aa). 30–35 is a binding site for ATP; it reads CSGKNT.

This sequence belongs to the CoaE family.

Its subcellular location is the cytoplasm. It carries out the reaction 3'-dephospho-CoA + ATP = ADP + CoA + H(+). The protein operates within cofactor biosynthesis; coenzyme A biosynthesis; CoA from (R)-pantothenate: step 5/5. Its function is as follows. Catalyzes the phosphorylation of the 3'-hydroxyl group of dephosphocoenzyme A to form coenzyme A. The polypeptide is Dephospho-CoA kinase (Treponema denticola (strain ATCC 35405 / DSM 14222 / CIP 103919 / JCM 8153 / KCTC 15104)).